The chain runs to 274 residues: Formamidopyrimidine-DNA glycosylase (274 aa).

P2 acts as the Schiff-base intermediate with DNA in catalysis. E3 acts as the Proton donor in catalysis. K57 (proton donor; for beta-elimination activity) is an active-site residue. The DNA site is built by H92, R111, and K152. An FPG-type zinc finger spans residues 237–271 (QVYGRKGEECNDCGSIIEAKVIGQRNSFYCPKCQR). The Proton donor; for delta-elimination activity role is filled by R261.

The protein belongs to the FPG family. Monomer. It depends on Zn(2+) as a cofactor.

The catalysed reaction is Hydrolysis of DNA containing ring-opened 7-methylguanine residues, releasing 2,6-diamino-4-hydroxy-5-(N-methyl)formamidopyrimidine.. It carries out the reaction 2'-deoxyribonucleotide-(2'-deoxyribose 5'-phosphate)-2'-deoxyribonucleotide-DNA = a 3'-end 2'-deoxyribonucleotide-(2,3-dehydro-2,3-deoxyribose 5'-phosphate)-DNA + a 5'-end 5'-phospho-2'-deoxyribonucleoside-DNA + H(+). In terms of biological role, involved in base excision repair of DNA damaged by oxidation or by mutagenic agents. Acts as a DNA glycosylase that recognizes and removes damaged bases. Has a preference for oxidized purines, such as 7,8-dihydro-8-oxoguanine (8-oxoG). Has AP (apurinic/apyrimidinic) lyase activity and introduces nicks in the DNA strand. Cleaves the DNA backbone by beta-delta elimination to generate a single-strand break at the site of the removed base with both 3'- and 5'-phosphates. The sequence is that of Formamidopyrimidine-DNA glycosylase from Glaesserella parasuis serovar 5 (strain SH0165) (Haemophilus parasuis).